Reading from the N-terminus, the 118-residue chain is Putative pterin-4-alpha-carbinolamine dehydratase (118 aa).

The protein belongs to the pterin-4-alpha-carbinolamine dehydratase family.

The catalysed reaction is (4aS,6R)-4a-hydroxy-L-erythro-5,6,7,8-tetrahydrobiopterin = (6R)-L-erythro-6,7-dihydrobiopterin + H2O. The polypeptide is Putative pterin-4-alpha-carbinolamine dehydratase (Pseudomonas fluorescens (strain SBW25)).